The primary structure comprises 112 residues: Mitochondrial import inner membrane translocase subunit TIM14-2 (112 aa).

Residues 7-25 (AGAAVAAAAYAGKYGIEAW) form a helical membrane-spanning segment. One can recognise a J domain in the interval 53 to 112 (EAALILGVRESVAAEKVKEAHRRVMVANHPDAGGSHYLASKINEAKDMMLGKTKNSGSAF).

Belongs to the TIM14 family. In terms of assembly, probable component of the PAM complex at least composed of a mitochondrial HSP70 protein, TIMM44 and TIMM14. The complex interacts with the TIMM23 component of the TIM17:23 complex.

The protein resides in the mitochondrion. It localises to the mitochondrion inner membrane. Its function is as follows. Component of the PAM complex, a complex required for the translocation of transit peptide-containing proteins from the inner membrane into the mitochondrial matrix in an ATP-dependent manner. The sequence is that of Mitochondrial import inner membrane translocase subunit TIM14-2 (TIM14-2) from Arabidopsis thaliana (Mouse-ear cress).